Consider the following 295-residue polypeptide: Aspartate carbamoyltransferase catalytic subunit (295 aa).

Carbamoyl phosphate contacts are provided by Arg49 and Thr50. Lys77 contributes to the L-aspartate binding site. Residues Arg99, His127, and Gln130 each contribute to the carbamoyl phosphate site. Arg161 and Arg212 together coordinate L-aspartate. Residues Gly251 and Pro252 each contribute to the carbamoyl phosphate site.

The protein belongs to the aspartate/ornithine carbamoyltransferase superfamily. ATCase family. In terms of assembly, heterododecamer (2C3:3R2) of six catalytic PyrB chains organized as two trimers (C3), and six regulatory PyrI chains organized as three dimers (R2).

It catalyses the reaction carbamoyl phosphate + L-aspartate = N-carbamoyl-L-aspartate + phosphate + H(+). It participates in pyrimidine metabolism; UMP biosynthesis via de novo pathway; (S)-dihydroorotate from bicarbonate: step 2/3. In terms of biological role, catalyzes the condensation of carbamoyl phosphate and aspartate to form carbamoyl aspartate and inorganic phosphate, the committed step in the de novo pyrimidine nucleotide biosynthesis pathway. The chain is Aspartate carbamoyltransferase catalytic subunit from Aliarcobacter butzleri (strain RM4018) (Arcobacter butzleri).